An 80-amino-acid chain; its full sequence is Exodeoxyribonuclease 7 small subunit (80 aa).

Belongs to the XseB family. As to quaternary structure, heterooligomer composed of large and small subunits.

It localises to the cytoplasm. It catalyses the reaction Exonucleolytic cleavage in either 5'- to 3'- or 3'- to 5'-direction to yield nucleoside 5'-phosphates.. In terms of biological role, bidirectionally degrades single-stranded DNA into large acid-insoluble oligonucleotides, which are then degraded further into small acid-soluble oligonucleotides. This Pseudomonas fluorescens (strain Pf0-1) protein is Exodeoxyribonuclease 7 small subunit.